A 943-amino-acid chain; its full sequence is Mechanosensitive ion channel protein BA (943 aa).

The disordered stretch occupies residues 1 to 67; the sequence is MPNPNDVTID…PPSSSLGFGH (67 aa). Topologically, residues 1–107 are cytoplasmic; that stretch reads MPNPNDVTID…AVLNFSTVTR (107 aa). A compositionally biased stretch (polar residues) spans 14-37; that stretch reads TSVSSRGQTGARNNSTNIPNSPSG. A helical transmembrane segment spans residues 108–130; that stretch reads YLIYIAPLAALLAIPIIVGATAA. The Lumenal portion of the chain corresponds to 131 to 149; sequence EDAKIGGVSLPWFFCWVEV. Residues 150–175 traverse the membrane as a helical segment; that stretch reads VWVSLWVCKLVAKVIPFVFQFVCGIV. Residues 176–195 lie on the Cytoplasmic side of the membrane; the sequence is SAGTRKYALILRNLEIPITM. A helical transmembrane segment spans residues 196–214; sequence VLWMIVSLVTFLPIMVYNP. Topologically, residues 215–233 are lumenal; it reads RNKREGDTETKSWEKSVKN. Residues 234 to 259 traverse the membrane as a helical segment; the sequence is VLFAFLVCALIFLGEKTLVQLISISY. Topologically, residues 260–468 are cytoplasmic; the sequence is HRKQFDARIK…DQAIHVLDNL (209 aa). The EF-hand domain occupies 412 to 447; sequence GKEAEAEECFTMLDRDGNGDISLDEIILAISEIGRT. Asp425, Asp427, Asn429, Asp431, and Glu436 together coordinate Ca(2+). Residues 469-489 form a helical membrane-spanning segment; it reads LATIAFIIAVLVFVSFVTSGF. Over 490–502 the chain is Lumenal; that stretch reads GTVIAAGATSLLS. A helical transmembrane segment spans residues 503-523; it reads LSFVFATTAQEVLGSCIFLFV. Residues 524 to 943 are Cytoplasmic-facing; the sequence is KHPFDIGDRV…QRRNYESRRL (420 aa). A disordered region spans residues 677–943; that stretch reads PGAAAEDAAA…QRRNYESRRL (267 aa). Low complexity-rich tracts occupy residues 678–687 and 744–759; these read GAAAEDAAAA and GASA…AGSA. Positions 760–781 are enriched in polar residues; it reads YSETTLNNTVSEPYQRSFTPNT. Over residues 798–810 the composition is skewed to basic and acidic residues; the sequence is TERHLGVSHDSIA. A compositionally biased stretch (polar residues) spans 827 to 842; the sequence is TTANQSLASPTTMQSE. Positions 857–880 are enriched in low complexity; it reads PSSSQYSQQYPQQQSQSPYSYTYS. A compositionally biased stretch (polar residues) spans 886–904; sequence PESSLQPLEHTTSYNQSLP. Basic and acidic residues predominate over residues 916-943; the sequence is NSLEGHSPHVDPRHMTEEQRRNYESRRL.

This sequence belongs to the MscS (TC 1.A.23) family.

It is found in the cell membrane. It carries out the reaction Ca(2+)(in) = Ca(2+)(out). In terms of biological role, acts as a mechanosensitive calcium channel in response to membrane stretch. Regulates intracellular calcium levels and cell volume for survival in response to hypo-osmotic shock. Involved in maintaining vacuole integrity and protecting the nuclear envelope upon hypo-osmotic shock. seems to contribute to CaCl2 toxicityIn contracstz to mscA, mscB seems to contribute to CaCl(2) toxicity. This chain is Mechanosensitive ion channel protein BA, found in Emericella nidulans (strain FGSC A4 / ATCC 38163 / CBS 112.46 / NRRL 194 / M139) (Aspergillus nidulans).